The primary structure comprises 394 residues: MATIFLFTKNVFIALAFALFAQGLTIPDGIEKRTDKVVSLDFTVIRKPFNATAHRLIQKRSDVPTTLINEGPSYAADIVVGSNQQKQTVVIDTGSSDLWVVDTDAECQVTYSGQTNNFCKQEGTFDPSSSSSAQNLNQDFSIEYGDLTSSQGSFYKDTVGFGGISIKNQQFADVTTTSVDQGIMGIGFTAVEAGYNLYSNVPVTLKKQGIINKNAYSCDLNSEDASTGKIIFGGVDNAKYTGTLTALPVTSSVELRVHLGSINFDGTSVSTNADVVLDSGTTITYFSQSTADKFARIVGATWDSRNEIYRLPSCDLSGDAVVNFDQGVKITVPLSELILKDSDSSICYFGISRNDANILGDNFLRRAYIVYDLDDKTISLAQVKYTSSSDISAL.

The first 23 residues, 1-23 (MATIFLFTKNVFIALAFALFAQG), serve as a signal peptide directing secretion. A propeptide spans 24 to 60 (LTIPDGIEKRTDKVVSLDFTVIRKPFNATAHRLIQKR) (activation peptide). Asn-50 carries N-linked (GlcNAc...) asparagine glycosylation. Positions 74–381 (YAADIVVGSN…DLDDKTISLA (308 aa)) constitute a Peptidase A1 domain. The active site involves Asp-92. Cysteines 107 and 119 form a disulfide. Residue Asp-278 is part of the active site. Residues Cys-314 and Cys-347 are joined by a disulfide bond.

The protein belongs to the peptidase A1 family. In terms of processing, O-glycosylated.

The protein resides in the secreted. The catalysed reaction is Preferential cleavage at the carboxyl of hydrophobic amino acids, but fails to cleave 15-Leu-|-Tyr-16, 16-Tyr-|-Leu-17 and 24-Phe-|-Phe-25 of insulin B chain. Activates trypsinogen, and degrades keratin.. The polypeptide is Candidapepsin (SAPT1) (Candida tropicalis (Yeast)).